The chain runs to 414 residues: Ankyrin repeat domain-containing protein 10 (414 aa).

ANK repeat units follow at residues 18-47, 54-83, 88-117, 121-150, and 154-187; these read TLRFPLHRACRDGDLPALCALLQSAPRSDL, YGWTPIHWAAHFGKLECLMQLVRAGASVNA, FAQTPAHIAAFGGHPQCLNWLIQVGANINK, VGETPIHKAARSGSVDSISALVAHGAQIDL, and SGLTAADLAHTQGFQECAQFLLNLQNCHLNRYYS. A disordered region spans residues 310 to 332; sequence GVTSPSRHRIHTSNGTEEPEKAM.

This is Ankyrin repeat domain-containing protein 10 (ANKRD10) from Gallus gallus (Chicken).